The chain runs to 255 residues: Triosephosphate isomerase (255 aa).

Position 9–11 (9–11 (NWK)) interacts with substrate. H100 (electrophile) is an active-site residue. The active-site Proton acceptor is the E169. Residues G175, S208, and 229 to 230 (GG) contribute to the substrate site.

The protein belongs to the triosephosphate isomerase family. Homodimer.

It localises to the cytoplasm. It catalyses the reaction D-glyceraldehyde 3-phosphate = dihydroxyacetone phosphate. Its pathway is carbohydrate biosynthesis; gluconeogenesis. The protein operates within carbohydrate degradation; glycolysis; D-glyceraldehyde 3-phosphate from glycerone phosphate: step 1/1. In terms of biological role, involved in the gluconeogenesis. Catalyzes stereospecifically the conversion of dihydroxyacetone phosphate (DHAP) to D-glyceraldehyde-3-phosphate (G3P). The sequence is that of Triosephosphate isomerase from Synechococcus sp. (strain JA-3-3Ab) (Cyanobacteria bacterium Yellowstone A-Prime).